A 339-amino-acid polypeptide reads, in one-letter code: DNA-directed RNA polymerase subunit alpha (339 aa).

The interval 1–233 (MVREEVAGST…DLFLPFLHAE (233 aa)) is alpha N-terminal domain (alpha-NTD). Positions 264–339 (KKGIPLNCIF…IDLLKNKLSF (76 aa)) are alpha C-terminal domain (alpha-CTD).

Belongs to the RNA polymerase alpha chain family. In terms of assembly, in plastids the minimal PEP RNA polymerase catalytic core is composed of four subunits: alpha, beta, beta', and beta''. When a (nuclear-encoded) sigma factor is associated with the core the holoenzyme is formed, which can initiate transcription.

Its subcellular location is the plastid. It localises to the chloroplast. It carries out the reaction RNA(n) + a ribonucleoside 5'-triphosphate = RNA(n+1) + diphosphate. DNA-dependent RNA polymerase catalyzes the transcription of DNA into RNA using the four ribonucleoside triphosphates as substrates. This Australopyrum velutinum (Mountain wheat-grass) protein is DNA-directed RNA polymerase subunit alpha.